The following is a 241-amino-acid chain: Demethylmenaquinone methyltransferase (241 aa).

Residues Thr68, Asp88, and 114-115 (DA) each bind S-adenosyl-L-methionine.

It belongs to the class I-like SAM-binding methyltransferase superfamily. MenG/UbiE family.

The enzyme catalyses a 2-demethylmenaquinol + S-adenosyl-L-methionine = a menaquinol + S-adenosyl-L-homocysteine + H(+). Its pathway is quinol/quinone metabolism; menaquinone biosynthesis; menaquinol from 1,4-dihydroxy-2-naphthoate: step 2/2. Methyltransferase required for the conversion of demethylmenaquinol (DMKH2) to menaquinol (MKH2). In Deinococcus radiodurans (strain ATCC 13939 / DSM 20539 / JCM 16871 / CCUG 27074 / LMG 4051 / NBRC 15346 / NCIMB 9279 / VKM B-1422 / R1), this protein is Demethylmenaquinone methyltransferase.